A 285-amino-acid polypeptide reads, in one-letter code: Formamidopyrimidine-DNA glycosylase (285 aa).

Residue Pro2 is the Schiff-base intermediate with DNA of the active site. Glu3 serves as the catalytic Proton donor. The active-site Proton donor; for beta-elimination activity is Lys61. DNA is bound by residues His102, Arg121, and Lys163. The FPG-type zinc finger occupies 249-283 (NAYGQAGKPCARCGTPIARETFMNRGSHFCNRCQK). The active-site Proton donor; for delta-elimination activity is Arg273.

It belongs to the FPG family. As to quaternary structure, monomer. The cofactor is Zn(2+).

It carries out the reaction Hydrolysis of DNA containing ring-opened 7-methylguanine residues, releasing 2,6-diamino-4-hydroxy-5-(N-methyl)formamidopyrimidine.. It catalyses the reaction 2'-deoxyribonucleotide-(2'-deoxyribose 5'-phosphate)-2'-deoxyribonucleotide-DNA = a 3'-end 2'-deoxyribonucleotide-(2,3-dehydro-2,3-deoxyribose 5'-phosphate)-DNA + a 5'-end 5'-phospho-2'-deoxyribonucleoside-DNA + H(+). Its function is as follows. Involved in base excision repair of DNA damaged by oxidation or by mutagenic agents. Acts as a DNA glycosylase that recognizes and removes damaged bases. Has a preference for oxidized purines, such as 7,8-dihydro-8-oxoguanine (8-oxoG). Has AP (apurinic/apyrimidinic) lyase activity and introduces nicks in the DNA strand. Cleaves the DNA backbone by beta-delta elimination to generate a single-strand break at the site of the removed base with both 3'- and 5'-phosphates. This is Formamidopyrimidine-DNA glycosylase from Corynebacterium efficiens (strain DSM 44549 / YS-314 / AJ 12310 / JCM 11189 / NBRC 100395).